The following is a 762-amino-acid chain: Ribosome-releasing factor 2, mitochondrial (762 aa).

The transit peptide at 1–35 (MLLSLTFPVLRGCTGHLVNRSLQAPRWRVTWKRSY) directs the protein to the mitochondrion. Residues 54-341 (SKIRNIGIMA…AITAYLPAPN (288 aa)) form the tr-type G domain. GTP is bound by residues 63–70 (AHIDAGKT), 127–131 (DTPGH), and 181–184 (NKMD).

The protein belongs to the TRAFAC class translation factor GTPase superfamily. Classic translation factor GTPase family. EF-G/EF-2 subfamily.

The protein localises to the mitochondrion. It catalyses the reaction GTP + H2O = GDP + phosphate + H(+). In terms of biological role, mitochondrial GTPase that mediates the disassembly of ribosomes from messenger RNA at the termination of mitochondrial protein biosynthesis. Acts in collaboration with mrrf. GTP hydrolysis follows the ribosome disassembly and probably occurs on the ribosome large subunit. Not involved in the GTP-dependent ribosomal translocation step during translation elongation. The sequence is that of Ribosome-releasing factor 2, mitochondrial (gfm2) from Danio rerio (Zebrafish).